Consider the following 163-residue polypeptide: uncharacterized protein (163 aa).

This is an uncharacterized protein from Orgyia pseudotsugata (Douglas-fir tussock moth).